The sequence spans 157 residues: MEDLEEENFTLSVSSPKDAEFDSVVGHMEDIIMDDEFQLLQHGFMDKYYHEFEDTEENKLTYTTIFNEYIGLVEKFIEEQLLLRIPAFNMSAFISSLQCHREEIAGDIFDILLTFTDFLAFKEMFLDYKAEKEGRTVDLSCGLVVTPLIGSSVSSSS.

This sequence belongs to the ARL2BP family.

It is found in the cytoplasm. Its subcellular location is the mitochondrion intermembrane space. It localises to the cytoskeleton. The protein localises to the microtubule organizing center. The protein resides in the centrosome. It is found in the nucleus. Its subcellular location is the spindle. It localises to the cilium basal body. Its function is as follows. Plays a role as an effector of the ADP-ribosylation factor-like protein 2, ARL2. This Xenopus tropicalis (Western clawed frog) protein is ADP-ribosylation factor-like protein 2-binding protein (arl2bp).